Reading from the N-terminus, the 132-residue chain is Myelin P2 protein (132 aa).

Ser-2 is subject to N-acetylserine. Residue Arg-107 coordinates (9Z)-octadecenoate. Arg-107 serves as a coordination point for hexadecanoate. A disulfide bond links Cys-118 and Cys-125. Residue 127 to 129 (RIY) participates in (9Z)-octadecenoate binding. A hexadecanoate-binding site is contributed by 127 to 129 (RIY).

It belongs to the calycin superfamily. Fatty-acid binding protein (FABP) family. In terms of assembly, monomer.

Its subcellular location is the cytoplasm. May play a role in lipid transport protein in Schwann cells. May bind cholesterol. The chain is Myelin P2 protein from Sus scrofa (Pig).